Reading from the N-terminus, the 399-residue chain is Acetate kinase (399 aa).

Position 9 (Asn-9) interacts with Mg(2+). Lys-16 is an ATP binding site. Arg-90 serves as a coordination point for substrate. The active-site Proton donor/acceptor is the Asp-147. Residues 207-211 (HLGNG), 281-283 (DFR), and 333-337 (GVGEN) each bind ATP. Glu-387 contacts Mg(2+).

Belongs to the acetokinase family. As to quaternary structure, homodimer. The cofactor is Mg(2+). Requires Mn(2+) as cofactor.

It is found in the cytoplasm. The enzyme catalyses acetate + ATP = acetyl phosphate + ADP. It participates in metabolic intermediate biosynthesis; acetyl-CoA biosynthesis; acetyl-CoA from acetate: step 1/2. Catalyzes the formation of acetyl phosphate from acetate and ATP. Can also catalyze the reverse reaction. The chain is Acetate kinase from Mycobacterium sp. (strain JLS).